A 550-amino-acid chain; its full sequence is Arginine--tRNA ligase (550 aa).

The 'HIGH' region motif lies at 130 to 140 (ANPTGPIHIGG).

The protein belongs to the class-I aminoacyl-tRNA synthetase family. As to quaternary structure, monomer.

It localises to the cytoplasm. The catalysed reaction is tRNA(Arg) + L-arginine + ATP = L-arginyl-tRNA(Arg) + AMP + diphosphate. The sequence is that of Arginine--tRNA ligase from Mycobacterium sp. (strain KMS).